A 391-amino-acid chain; its full sequence is Phosphoglycerate kinase (391 aa).

Substrate is bound by residues 21–23, arginine 36, 59–62, arginine 113, and arginine 146; these read DLN and HLGR. Residues lysine 197, glutamate 319, and 345-348 each bind ATP; that span reads GGDT.

The protein belongs to the phosphoglycerate kinase family. As to quaternary structure, monomer.

It localises to the cytoplasm. It catalyses the reaction (2R)-3-phosphoglycerate + ATP = (2R)-3-phospho-glyceroyl phosphate + ADP. The protein operates within carbohydrate degradation; glycolysis; pyruvate from D-glyceraldehyde 3-phosphate: step 2/5. This chain is Phosphoglycerate kinase, found in Xanthomonas oryzae pv. oryzae (strain MAFF 311018).